Consider the following 176-residue polypeptide: NAD(P)H-quinone oxidoreductase subunit 6, chloroplastic (176 aa).

5 helical membrane passes run 10-30, 32-52, 61-81, 92-112, and 152-172; these read FLLVFLGSGLILGGLGVVLLT, PIYSAFSLGLVLVCISLFYIL, AQLLIYVGAINVLILFAVMFM, LWTIGNGLTSLVCTSILVSLI, and FFLPFEFISIILLVALIGAIA.

It belongs to the complex I subunit 6 family. As to quaternary structure, NDH is composed of at least 16 different subunits, 5 of which are encoded in the nucleus.

The protein resides in the plastid. It is found in the chloroplast thylakoid membrane. The catalysed reaction is a plastoquinone + NADH + (n+1) H(+)(in) = a plastoquinol + NAD(+) + n H(+)(out). The enzyme catalyses a plastoquinone + NADPH + (n+1) H(+)(in) = a plastoquinol + NADP(+) + n H(+)(out). Its function is as follows. NDH shuttles electrons from NAD(P)H:plastoquinone, via FMN and iron-sulfur (Fe-S) centers, to quinones in the photosynthetic chain and possibly in a chloroplast respiratory chain. The immediate electron acceptor for the enzyme in this species is believed to be plastoquinone. Couples the redox reaction to proton translocation, and thus conserves the redox energy in a proton gradient. The sequence is that of NAD(P)H-quinone oxidoreductase subunit 6, chloroplastic (ndhG) from Gossypium hirsutum (Upland cotton).